The following is a 72-amino-acid chain: Protein RALF-like 20 (72 aa).

Residues 1-27 (MVLSKKTIMQSFALMIILSIVMSTTEA) form the signal peptide. 2 cysteine pairs are disulfide-bonded: C43–C51 and C63–C69.

It belongs to the plant rapid alkalinization factor (RALF) family.

Its subcellular location is the secreted. In terms of biological role, cell signaling peptide that may regulate plant stress, growth, and development. Mediates a rapid alkalinization of extracellular space by mediating a transient increase in the cytoplasmic Ca(2+) concentration leading to a calcium-dependent signaling events through a cell surface receptor and a concomitant activation of some intracellular mitogen-activated protein kinases. This chain is Protein RALF-like 20 (RALFL20), found in Arabidopsis thaliana (Mouse-ear cress).